Reading from the N-terminus, the 95-residue chain is Large ribosomal subunit protein bL27 (95 aa).

Positions 1–12 (MLLIKKINLQFF) are excised as a propeptide. The disordered stretch occupies residues 17–37 (GVGSTKNGRDSNPKYLGAKKS).

It belongs to the bacterial ribosomal protein bL27 family. The N-terminus is cleaved by ribosomal processing cysteine protease Prp.

This is Large ribosomal subunit protein bL27 from Malacoplasma penetrans (strain HF-2) (Mycoplasma penetrans).